A 31-amino-acid chain; its full sequence is Photosystem II reaction center protein T (31 aa).

A helical transmembrane segment spans residues 3–23 (AFSYVLILTLALVTLFFAVAF).

It belongs to the PsbT family. PSII is composed of 1 copy each of membrane proteins PsbA, PsbB, PsbC, PsbD, PsbE, PsbF, PsbH, PsbI, PsbJ, PsbK, PsbL, PsbM, PsbT, PsbX, PsbY, Psb30/Ycf12, peripheral proteins PsbO, CyanoQ (PsbQ), PsbU, PsbV and a large number of cofactors. It forms dimeric complexes.

It localises to the cellular thylakoid membrane. Its function is as follows. Found at the monomer-monomer interface of the photosystem II (PS II) dimer, plays a role in assembly and dimerization of PSII. PSII is a light-driven water plastoquinone oxidoreductase, using light energy to abstract electrons from H(2)O, generating a proton gradient subsequently used for ATP formation. The protein is Photosystem II reaction center protein T of Prochlorococcus marinus (strain NATL2A).